Reading from the N-terminus, the 409-residue chain is Tryptophan synthase beta chain 1 (409 aa).

At lysine 104 the chain carries N6-(pyridoxal phosphate)lysine.

This sequence belongs to the TrpB family. As to quaternary structure, tetramer of two alpha and two beta chains. The cofactor is pyridoxal 5'-phosphate.

It catalyses the reaction (1S,2R)-1-C-(indol-3-yl)glycerol 3-phosphate + L-serine = D-glyceraldehyde 3-phosphate + L-tryptophan + H2O. It participates in amino-acid biosynthesis; L-tryptophan biosynthesis; L-tryptophan from chorismate: step 5/5. In terms of biological role, the beta subunit is responsible for the synthesis of L-tryptophan from indole and L-serine. This Nostoc sp. (strain PCC 7120 / SAG 25.82 / UTEX 2576) protein is Tryptophan synthase beta chain 1 (trpB1).